A 185-amino-acid chain; its full sequence is Ribosome-recycling factor (185 aa).

A compositionally biased stretch (basic and acidic residues) spans 138-179 (TLKRQEKNGDITEDEQRSLEKQVQKVTDDATKEIDKLADQKS). Residues 138 to 185 (TLKRQEKNGDITEDEQRSLEKQVQKVTDDATKEIDKLADQKSQEITQG) are disordered.

Belongs to the RRF family.

It is found in the cytoplasm. Its function is as follows. Responsible for the release of ribosomes from messenger RNA at the termination of protein biosynthesis. May increase the efficiency of translation by recycling ribosomes from one round of translation to another. The protein is Ribosome-recycling factor of Lactobacillus gasseri (strain ATCC 33323 / DSM 20243 / BCRC 14619 / CIP 102991 / JCM 1131 / KCTC 3163 / NCIMB 11718 / NCTC 13722 / AM63).